Consider the following 782-residue polypeptide: MFPPSGSTGLIPPSHFQARPLSTLPRMAPTWLSDIPLVQPPGHQDVSERRLDTQRPQVTMWERDVSSDRQEPGRRGRSWGLEGSQALSQQAEVIARQLQELRRLEEEVRLLRETSLQQKMRLEAQAMELEALARAEKAGRAEAEGLRAALAGAEVVRKNLEEGSQRELEEVQRLHQEQLSSLTQAHEEALSSLTSKAEGLEKSLSSLETRRAGEAKELAEAQREAELLRKQLSKTQEDLEAQVTLVENLRKYVGEQVPSEVHSQTWELERQKLLETMQHLQEDRDSLQATVELLQVRVQSLTHILALQEEELTRKVQPSDSLEPEFTRKCQSLLNRWREKVFALMVQLKAQELEHSDSVKQLKGQVASLQEKVTSQSQEQAILQRSLQDKAAEVEVERMGAKGLQLELSRAQEARRRWQQQTASAEEQLRLVVNAVSSSQIWLETTMAKVEEAAAQLPSLNNRLSYAVRKVHTIRGLIARKLALAQLRQESCPLPPPVADVSLELQQLREERNRLDAELQLSARLIQQEVGRAREQGEAERQQLSKVAQQLERELQQTQESLASLGLQLEVARQGQQESTEEAASLRQELTQQQELYGQALQEKVAEVETRLREQLSDTERRLNEARREHAKAVVSLRQIQRRAAQEKERSQELRRLQEEARKEEGQRLARRLQELERDKNLMLATLQQEGLLSRYKQQRLLTVLPSLLDKKKSVVSSPRPPECSASAPIAAAVPTRESIKGSLSVLLDDLQGLSEAISKEEAVCQGDNLDRCSSSNPQMSS.

Basic and acidic residues-rich tracts occupy residues 62–74 (ERDV…EPGR) and 208–218 (ETRRAGEAKEL). 2 disordered regions span residues 62–82 (ERDV…WGLE) and 182–218 (LTQA…AKEL). Coiled-coil stretches lie at residues 82-314 (EGSQ…ELTR), 344-437 (LMVQ…NAVS), and 498-691 (VADV…QQEG).

It localises to the cytoplasm. The protein resides in the nucleus. May be a regulator of keratinocyte proliferation or differentiation. The sequence is that of Coiled-coil alpha-helical rod protein 1 (CCHCR1) from Pan paniscus (Pygmy chimpanzee).